The primary structure comprises 203 residues: Probable deoxycytidylate deaminase (203 aa).

Residues 27–163 (HWDDYFMATS…PTYRASKRML (137 aa)) form the CMP/dCMP-type deaminase domain. H102 is a binding site for Zn(2+). The active-site Proton donor is E104. The Zn(2+) site is built by C128 and C131.

The protein belongs to the cytidine and deoxycytidylate deaminase family. Zn(2+) is required as a cofactor.

The enzyme catalyses dCMP + H2O + H(+) = dUMP + NH4(+). Its function is as follows. Supplies the nucleotide substrate for thymidylate synthetase. The protein is Probable deoxycytidylate deaminase of Drosophila melanogaster (Fruit fly).